The chain runs to 431 residues: Enolase (431 aa).

Glutamine 166 provides a ligand contact to (2R)-2-phosphoglycerate. Glutamate 208 (proton donor) is an active-site residue. 3 residues coordinate Mg(2+): aspartate 245, glutamate 289, and aspartate 316. (2R)-2-phosphoglycerate-binding residues include lysine 341, arginine 370, serine 371, and lysine 392. The active-site Proton acceptor is the lysine 341.

This sequence belongs to the enolase family. It depends on Mg(2+) as a cofactor.

It localises to the cytoplasm. The protein resides in the secreted. The protein localises to the cell surface. It catalyses the reaction (2R)-2-phosphoglycerate = phosphoenolpyruvate + H2O. Its pathway is carbohydrate degradation; glycolysis; pyruvate from D-glyceraldehyde 3-phosphate: step 4/5. Its function is as follows. Catalyzes the reversible conversion of 2-phosphoglycerate (2-PG) into phosphoenolpyruvate (PEP). It is essential for the degradation of carbohydrates via glycolysis. The polypeptide is Enolase (Ruminiclostridium cellulolyticum (strain ATCC 35319 / DSM 5812 / JCM 6584 / H10) (Clostridium cellulolyticum)).